We begin with the raw amino-acid sequence, 432 residues long: Histidinol dehydrogenase (432 aa).

3 residues coordinate NAD(+): Y130, Q191, and N214. The substrate site is built by S237, Q259, and H262. Residues Q259 and H262 each coordinate Zn(2+). Catalysis depends on proton acceptor residues E327 and H328. Substrate-binding residues include H328, D361, E415, and H420. A Zn(2+)-binding site is contributed by D361. H420 contacts Zn(2+).

This sequence belongs to the histidinol dehydrogenase family. It depends on Zn(2+) as a cofactor.

It carries out the reaction L-histidinol + 2 NAD(+) + H2O = L-histidine + 2 NADH + 3 H(+). The protein operates within amino-acid biosynthesis; L-histidine biosynthesis; L-histidine from 5-phospho-alpha-D-ribose 1-diphosphate: step 9/9. Its function is as follows. Catalyzes the sequential NAD-dependent oxidations of L-histidinol to L-histidinaldehyde and then to L-histidine. The chain is Histidinol dehydrogenase from Agrobacterium fabrum (strain C58 / ATCC 33970) (Agrobacterium tumefaciens (strain C58)).